A 742-amino-acid polypeptide reads, in one-letter code: Phosphoribosylformylglycinamidine synthase subunit PurL (742 aa).

Residue H54 is part of the active site. ATP-binding residues include Y57 and K96. E98 serves as a coordination point for Mg(2+). Substrate-binding positions include 99–102 (SHNH) and R121. Residue H100 is the Proton acceptor of the active site. D122 lines the Mg(2+) pocket. Substrate is bound at residue Q245. D273 is a binding site for Mg(2+). Substrate is bound at residue 317–319 (ESQ). ATP is bound by residues D500 and G537. Residue N538 coordinates Mg(2+). S540 serves as a coordination point for substrate.

This sequence belongs to the FGAMS family. In terms of assembly, monomer. Part of the FGAM synthase complex composed of 1 PurL, 1 PurQ and 2 PurS subunits.

It is found in the cytoplasm. The enzyme catalyses N(2)-formyl-N(1)-(5-phospho-beta-D-ribosyl)glycinamide + L-glutamine + ATP + H2O = 2-formamido-N(1)-(5-O-phospho-beta-D-ribosyl)acetamidine + L-glutamate + ADP + phosphate + H(+). Its pathway is purine metabolism; IMP biosynthesis via de novo pathway; 5-amino-1-(5-phospho-D-ribosyl)imidazole from N(2)-formyl-N(1)-(5-phospho-D-ribosyl)glycinamide: step 1/2. Functionally, part of the phosphoribosylformylglycinamidine synthase complex involved in the purines biosynthetic pathway. Catalyzes the ATP-dependent conversion of formylglycinamide ribonucleotide (FGAR) and glutamine to yield formylglycinamidine ribonucleotide (FGAM) and glutamate. The FGAM synthase complex is composed of three subunits. PurQ produces an ammonia molecule by converting glutamine to glutamate. PurL transfers the ammonia molecule to FGAR to form FGAM in an ATP-dependent manner. PurS interacts with PurQ and PurL and is thought to assist in the transfer of the ammonia molecule from PurQ to PurL. This is Phosphoribosylformylglycinamidine synthase subunit PurL from Oceanobacillus iheyensis (strain DSM 14371 / CIP 107618 / JCM 11309 / KCTC 3954 / HTE831).